We begin with the raw amino-acid sequence, 134 residues long: UPF0102 protein Adeh_1910 (134 aa).

This sequence belongs to the UPF0102 family.

In Anaeromyxobacter dehalogenans (strain 2CP-C), this protein is UPF0102 protein Adeh_1910.